Reading from the N-terminus, the 468-residue chain is Adenosylhomocysteinase (468 aa).

The substrate site is built by T63, D139, and E164. 165–167 (TTT) is a binding site for NAD(+). Substrate is bound by residues K194 and D198. NAD(+)-binding positions include N199, 228–233 (GYGDVG), E251, N300, 321–323 (IGH), and N374.

This sequence belongs to the adenosylhomocysteinase family. NAD(+) serves as cofactor.

It is found in the cytoplasm. It carries out the reaction S-adenosyl-L-homocysteine + H2O = L-homocysteine + adenosine. The protein operates within amino-acid biosynthesis; L-homocysteine biosynthesis; L-homocysteine from S-adenosyl-L-homocysteine: step 1/1. Its function is as follows. May play a key role in the regulation of the intracellular concentration of adenosylhomocysteine. This Stutzerimonas stutzeri (strain A1501) (Pseudomonas stutzeri) protein is Adenosylhomocysteinase.